Here is a 911-residue protein sequence, read N- to C-terminus: Valine--tRNA ligase (911 aa).

Positions 57-67 (PTVSGSLHVGH) match the 'HIGH' region motif. The short motif at 599–603 (KMSKS) is the 'KMSKS' region element. K602 provides a ligand contact to ATP. Residues 882 to 911 (EESAAEDAPETEVAVEASELGEPPVKKPKH) form a disordered region.

Belongs to the class-I aminoacyl-tRNA synthetase family. ValS type 2 subfamily. As to quaternary structure, monomer.

It is found in the cytoplasm. It carries out the reaction tRNA(Val) + L-valine + ATP = L-valyl-tRNA(Val) + AMP + diphosphate. Catalyzes the attachment of valine to tRNA(Val). As ValRS can inadvertently accommodate and process structurally similar amino acids such as threonine, to avoid such errors, it has a 'posttransfer' editing activity that hydrolyzes mischarged Thr-tRNA(Val) in a tRNA-dependent manner. The protein is Valine--tRNA ligase of Bifidobacterium longum subsp. infantis (strain ATCC 15697 / DSM 20088 / JCM 1222 / NCTC 11817 / S12).